The primary structure comprises 80 residues: DNA-directed RNA polymerase RPB10 homolog (80 aa).

4 residues coordinate Zn(2+): Cys-7, Cys-10, Cys-65, and Cys-66.

It belongs to the archaeal RpoN/eukaryotic RPB10 RNA polymerase subunit family. In terms of assembly, part of the viral DNA-directed RNA polymerase that consists of 8 polII-like subunits (RPB1, RPB2, RPB3, RPB5, RPB6, RPB7, RPB9, RPB10), a capping enzyme and a termination factor.

The protein resides in the host cytoplasm. Its function is as follows. Component of the DNA-directed RNA polymerase (RNAP) that catalyzes the transcription in the cytoplasm of viral DNA into RNA using the four ribonucleoside triphosphates as substrates. In African swine fever virus (isolate Pig/Kenya/KEN-50/1950) (ASFV), this protein is DNA-directed RNA polymerase RPB10 homolog.